The chain runs to 21 residues: Brevinin-1OKb (21 aa).

A Lysine amide modification is found at lysine 21.

Expressed by the skin glands.

The protein localises to the secreted. Functionally, antimicrobial peptide. In Nidirana okinavana (Kampira Falls frog), this protein is Brevinin-1OKb.